Reading from the N-terminus, the 193-residue chain is MDLLKQKVEADGVVIDEKILKVDGFLNHQIDARLMHDVGQTFYEQFKDEGITKILTIEASGIAPAIMAAMHFDVPCLFAKKAKPSTLKKGVYQAEIHSFTKNTTSTVVVSDEFLGENDRVLIIDDFLANGDASLGLNEIVKQAKATTVGIGIVVEKSFQPGRERLEEAGLTVSSLCKVASLSGNKVTFVGDEA.

The xanthine site is built by leucine 20 and asparagine 27. 128–132 lines the 5-phospho-alpha-D-ribose 1-diphosphate pocket; the sequence is ANGDA. A xanthine-binding site is contributed by lysine 156.

Belongs to the purine/pyrimidine phosphoribosyltransferase family. Xpt subfamily. As to quaternary structure, homodimer.

It is found in the cytoplasm. It carries out the reaction XMP + diphosphate = xanthine + 5-phospho-alpha-D-ribose 1-diphosphate. It functions in the pathway purine metabolism; XMP biosynthesis via salvage pathway; XMP from xanthine: step 1/1. Its function is as follows. Converts the preformed base xanthine, a product of nucleic acid breakdown, to xanthosine 5'-monophosphate (XMP), so it can be reused for RNA or DNA synthesis. The protein is Xanthine phosphoribosyltransferase of Staphylococcus saprophyticus subsp. saprophyticus (strain ATCC 15305 / DSM 20229 / NCIMB 8711 / NCTC 7292 / S-41).